The sequence spans 355 residues: Undecaprenyl-phosphate alpha-N-acetylglucosaminyl 1-phosphate transferase (355 aa).

A run of 8 helical transmembrane segments spans residues 1 to 21 (MLSI…MRPL), 39 to 59 (GTIP…YYLM), 63 to 83 (QLRL…IGIL), 123 to 143 (FQLT…IAII), 182 to 202 (WSFA…GIPF), 208 to 228 (VFMG…ILLL), 237 to 257 (MNPV…VAII), and 315 to 335 (WAMF…ITHA).

It belongs to the glycosyltransferase 4 family. WecA subfamily. Requires Mg(2+) as cofactor. Mn(2+) serves as cofactor.

The protein resides in the cell inner membrane. It carries out the reaction di-trans,octa-cis-undecaprenyl phosphate + UDP-N-acetyl-alpha-D-glucosamine = N-acetyl-alpha-D-glucosaminyl-di-trans,octa-cis-undecaprenyl diphosphate + UMP. The protein operates within bacterial outer membrane biogenesis; LPS O-antigen biosynthesis. In terms of biological role, catalyzes the transfer of the GlcNAc-1-phosphate moiety from UDP-GlcNAc onto the carrier lipid undecaprenyl phosphate (C55-P), yielding GlcNAc-pyrophosphoryl-undecaprenyl (GlcNAc-PP-C55). The protein is Undecaprenyl-phosphate alpha-N-acetylglucosaminyl 1-phosphate transferase of Haemophilus influenzae (strain ATCC 51907 / DSM 11121 / KW20 / Rd).